A 369-amino-acid chain; its full sequence is Putative FAD-dependent oxidoreductase LodB (369 aa).

Residues 10-14 (GGGPA) and Arg-103 contribute to the FAD site.

Requires FAD as cofactor.

It is found in the cytoplasm. In terms of biological role, is required for lysine-epsilon oxidase (LOD) activity in M.mediterranea. May be involved in the generation of the quinonic cofactor of LodA, leading to the active form of LodA containing a tyrosine-derived quinone cofactor. In Marinomonas mediterranea (strain ATCC 700492 / JCM 21426 / NBRC 103028 / MMB-1), this protein is Putative FAD-dependent oxidoreductase LodB (lodB).